A 903-amino-acid chain; its full sequence is Dual serine/threonine and tyrosine protein kinase (903 aa).

Residues 382–414 (ANRKQEEMKEMIVETLESMKEQLLEDAANLEFT) are a coiled coil. In terms of domain architecture, Protein kinase spans 627 to 881 (PKLGRELGRG…PLLGIVQPSL (255 aa)). ATP-binding positions include 633–641 (LGRGQYGVV) and K656. D752 functions as the Proton acceptor in the catalytic mechanism.

The protein belongs to the protein kinase superfamily. Ser/Thr protein kinase family.

The protein localises to the cytoplasm. Its subcellular location is the cell membrane. The protein resides in the apical cell membrane. It localises to the basolateral cell membrane. It is found in the cell junction. It carries out the reaction L-seryl-[protein] + ATP = O-phospho-L-seryl-[protein] + ADP + H(+). It catalyses the reaction L-threonyl-[protein] + ATP = O-phospho-L-threonyl-[protein] + ADP + H(+). The catalysed reaction is L-tyrosyl-[protein] + ATP = O-phospho-L-tyrosyl-[protein] + ADP + H(+). Functionally, may act as a positive regulator of ERK phosphorylation downstream of fibroblast growth factor-receptor activation. May induce both caspase-dependent apoptosis and caspase-independent cell death. May play a role in the embryonic development. This chain is Dual serine/threonine and tyrosine protein kinase, found in Pimephales promelas (Fathead minnow).